Consider the following 229-residue polypeptide: Ribonuclease 3 (229 aa).

One can recognise an RNase III domain in the interval 5–134 (EQKLEQDFGI…FLGALYLDQG (130 aa)). Residue Glu47 coordinates Mg(2+). The active site involves Asp51. Positions 120 and 123 each coordinate Mg(2+). The active site involves Glu123. A DRBM domain is found at 160–229 (DYKTALQERL…AKSALEQLGN (70 aa)).

This sequence belongs to the ribonuclease III family. In terms of assembly, homodimer. Mg(2+) is required as a cofactor.

Its subcellular location is the cytoplasm. It catalyses the reaction Endonucleolytic cleavage to 5'-phosphomonoester.. In terms of biological role, digests double-stranded RNA. Involved in the processing of primary rRNA transcript to yield the immediate precursors to the large and small rRNAs (23S and 16S). Also processes some mRNAs, and tRNAs when they are encoded in the rRNA operon. CRISPR (clustered regularly interspaced short palindromic repeat) is an adaptive immune system that provides protection against mobile genetic elements (viruses, transposable elements and conjugative plasmids). CRISPR clusters contain spacers, sequences complementary to antecedent mobile elements, and target invading nucleic acids. CRISPR clusters are transcribed and processed into CRISPR RNA (crRNA). In this organism endogenous ribonuclease 3 and Cas9 are required for correct coprocessing of pre-crRNA and the trans-encoded small RNA (tracrRNA). Cas9, crRNA and tracrRNA are required for cleavage of invading DNA. Complements pre-crRNA and tracRNA coprocessing defects in an rnc deletion in S.pyogenes strain 370. The sequence is that of Ribonuclease 3 from Streptococcus thermophilus (strain ATCC BAA-491 / LMD-9).